We begin with the raw amino-acid sequence, 353 residues long: MHLRHLFSSRLRGSLLLGSLLVVSSFSTQAAEEMLRKAVGKGAYEMAYSQQENALWLATSQSRKLDKGGVVYRLDPVTLEVTQAIHNDLKPFGATINNTTQTLWFGNTVNSAVTAIDAKTGEVKGRLVLDDRKRTEEVRPLQPRELVADDATNTVYISGIGKESVIWVVDGGNIKLKTAIQNTGKMSTGLALDSEGKRLYTTNADGELITIDTADNKILSRKKLLDDGKEHFFINISLDTARQRAFITDSKAAEVLVVDTRNGNILAKVAAPESLAVLFNPARNEAYVTHRQAGKVSVIDAKSYKVVKTFDTPTHPNSLALSADGKTLYVSVKQKSTKQQEATQPDDVIRIAL.

Residues 1-30 (MHLRHLFSSRLRGSLLLGSLLVVSSFSTQA) form the signal peptide.

In terms of assembly, monomer.

This is an uncharacterized protein from Escherichia coli (strain K12).